Consider the following 270-residue polypeptide: MRGCRVGQRTGTVGVRVFPVGLCALSLQARDCRGMCGKRLGKVMVLGCMLPGVAARVSLSPKLGVYGDARGGSDLWGICIQAPTMPDTENQAPPRYAPETPLVGLDVAFRAENGFLLQLTVDAALTRLMFCGRCLAGYSFRPGEGSTHLSVAAGFECTALIYDSQHFLSVLGQGLLQPSSSSYSAGNWHRPRSLLGVLTCTAKEVGAIHEESRIKGVCQNYAVPVQLGVQHYFGAHWGIDATATVSFGIDTKLAKFRIPYTLRVGPVFRT.

The protein to T.pallidum TP_0127, TP_0315 and TP_0618.

This is an uncharacterized protein from Treponema pallidum (strain Nichols).